A 54-amino-acid polypeptide reads, in one-letter code: MASKKGNRIVIKLKSTESGHTYTTEKNRRNDPNRLELRKYDPIVRRHVLYRETK.

The protein belongs to the bacterial ribosomal protein bL33 family.

In Chloroflexus aggregans (strain MD-66 / DSM 9485), this protein is Large ribosomal subunit protein bL33.